Reading from the N-terminus, the 328-residue chain is Hydrogenase-2 operon protein HybA (328 aa).

The signal sequence occupies residues 1–27 (MNRRNFIKAASCGALLTGALPSVSHAA). 4Fe-4S ferredoxin-type domains are found at residues 38-68 (LGML…RNPQ), 103-134 (NGYA…KDPK), and 136-165 (GIVH…YDYN). [4Fe-4S] cluster is bound by residues cysteine 47, cysteine 50, cysteine 53, cysteine 57, cysteine 112, cysteine 115, cysteine 120, cysteine 124, cysteine 145, cysteine 148, cysteine 151, cysteine 155, cysteine 174, cysteine 177, cysteine 193, and cysteine 197.

[4Fe-4S] cluster is required as a cofactor.

Its subcellular location is the periplasm. Its function is as follows. Participates in the periplasmic electron-transferring activity of hydrogenase 2 during its catalytic turnover. This is Hydrogenase-2 operon protein HybA (hybA) from Escherichia coli O157:H7.